Consider the following 265-residue polypeptide: Ubiquinone biosynthesis protein COQ4 homolog, mitochondrial (265 aa).

The N-terminal 30 residues, 1-30 (MMQRSWQSWRRGLTLGLASRRSYVASVEAP), are a transit peptide targeting the mitochondrion. The Zn(2+) site is built by His-170, Asp-171, His-174, and Glu-186.

This sequence belongs to the COQ4 family. Component of a multi-subunit COQ enzyme complex. The cofactor is Zn(2+).

Its subcellular location is the mitochondrion inner membrane. It carries out the reaction a 4-hydroxy-3-methoxy-5-(all-trans-polyprenyl)benzoate + H(+) = a 2-methoxy-6-(all-trans-polyprenyl)phenol + CO2. It participates in cofactor biosynthesis; ubiquinone biosynthesis. In terms of biological role, lyase that catalyzes the C1-decarboxylation of 4-hydroxy-3-methoxy-5-(all-trans-polyprenyl)benzoic acid into 2-methoxy-6-(all-trans-polyprenyl)phenol during ubiquinone biosynthesis. This is Ubiquinone biosynthesis protein COQ4 homolog, mitochondrial from Drosophila virilis (Fruit fly).